Consider the following 208-residue polypeptide: ATP-dependent Clp protease proteolytic subunit (208 aa).

Ser-112 functions as the Nucleophile in the catalytic mechanism. Residue His-137 is part of the active site.

This sequence belongs to the peptidase S14 family. Fourteen ClpP subunits assemble into 2 heptameric rings which stack back to back to give a disk-like structure with a central cavity, resembling the structure of eukaryotic proteasomes.

The protein resides in the cytoplasm. It carries out the reaction Hydrolysis of proteins to small peptides in the presence of ATP and magnesium. alpha-casein is the usual test substrate. In the absence of ATP, only oligopeptides shorter than five residues are hydrolyzed (such as succinyl-Leu-Tyr-|-NHMec, and Leu-Tyr-Leu-|-Tyr-Trp, in which cleavage of the -Tyr-|-Leu- and -Tyr-|-Trp bonds also occurs).. In terms of biological role, cleaves peptides in various proteins in a process that requires ATP hydrolysis. Has a chymotrypsin-like activity. Plays a major role in the degradation of misfolded proteins. This Buchnera aphidicola subsp. Acyrthosiphon pisum (strain APS) (Acyrthosiphon pisum symbiotic bacterium) protein is ATP-dependent Clp protease proteolytic subunit.